The following is a 360-amino-acid chain: Pyrimidine monooxygenase RutA (360 aa).

FMN is bound by residues 49 to 50 (IK), asparagine 115, glutamate 124, 140 to 141 (RY), and serine 190.

Belongs to the NtaA/SnaA/DszA monooxygenase family. RutA subfamily.

It carries out the reaction uracil + FMNH2 + NADH + O2 = (Z)-3-ureidoacrylate + FMN + NAD(+) + H2O + H(+). The enzyme catalyses thymine + FMNH2 + NADH + O2 = (Z)-2-methylureidoacrylate + FMN + NAD(+) + H2O + H(+). In terms of biological role, catalyzes the pyrimidine ring opening between N-3 and C-4 by an unusual flavin hydroperoxide-catalyzed mechanism, adding oxygen atoms in the process to yield ureidoacrylate peracid, that immediately reacts with FMN forming ureidoacrylate and FMN-N(5)-oxide. The FMN-N(5)-oxide reacts spontaneously with NADH to produce FMN. Requires the flavin reductase RutF to regenerate FMN in vivo. The chain is Pyrimidine monooxygenase RutA from Bradyrhizobium sp. (strain BTAi1 / ATCC BAA-1182).